A 2359-amino-acid polypeptide reads, in one-letter code: Nonribosomal peptide synthetase anaPS (2359 aa).

The segment at 239 to 633 (RNATVHGDTL…VRRKDNQVKI (395 aa)) is adenylation 1. The Carrier 1 domain maps to 770-846 (AAQGKGEEAI…ELASAANLSN (77 aa)). The residue at position 807 (Ser-807) is an O-(pantetheine 4'-phosphoryl)serine. The condensation 1 stretch occupies residues 883–1292 (EDIYPSTALQ…VGDLPRMSRQ (410 aa)). The interval 1321–1709 (LEYPNACAVS…GRKDSQIKIR (389 aa)) is adenylation 2. One can recognise a Carrier 2 domain in the interval 1842–1918 (APSNSVEQDL…AIANKIGVVS (77 aa)). Ser-1879 is subject to O-(pantetheine 4'-phosphoryl)serine. The condensation 2 stretch occupies residues 1936-2356 (LTPIQEFFFE…LVKCLEDLAS (421 aa)).

This sequence belongs to the NRP synthetase family.

It carries out the reaction anthranilate + L-tryptophan + 2 ATP = (R)-benzodiazepinedione + 2 AMP + 2 diphosphate + H(+). It participates in alkaloid biosynthesis. Functionally, nonribosomal peptide synthetase; part of the gene cluster that mediates the biosynthesis of the prenylated pyrroloindoline diketopiperazine acetylaszonalenin. The first step in the pathway is the formation of (R)-benzodiazepinedione by condensation of tryptophan and anthranilic acid catalyzed by the non-ribosomal peptide synthetase anaPS. The prenyltransferase anaPT then converts (R)-benzodiazepinedione to aszonalenin in the presence of dimethylallyl diphosphate (DMAPP) via C3-prenylation. The last step in the biosynthesis of acetylaszonalenin via acetylation of aszonalenin at position N1 catalyzed by anaAT. The polypeptide is Nonribosomal peptide synthetase anaPS (Neosartorya fischeri (strain ATCC 1020 / DSM 3700 / CBS 544.65 / FGSC A1164 / JCM 1740 / NRRL 181 / WB 181) (Aspergillus fischerianus)).